The chain runs to 35 residues: Kappa-theraphotoxin-Tb1a (35 aa).

Cystine bridges form between Cys-3–Cys-18, Cys-10–Cys-23, and Cys-17–Cys-30.

This sequence belongs to the neurotoxin 10 (Hwtx-1) family. 59 (Tltx) subfamily. As to quaternary structure, monomer. Expressed by the venom gland.

It localises to the secreted. Blocks Kv4.2/KCND2 voltage-gated potassium channels (IC(50) is 193.0 nM) by shifting the voltage-dependence of channel activation to more depolarized potentials. The toxin is thought to bind to the S3-S4 linker region of the voltage sensor domain. The sequence is that of Kappa-theraphotoxin-Tb1a from Theraphosa blondi (Goliath birdeating spider).